Here is a 146-residue protein sequence, read N- to C-terminus: UPF0178 protein R01393 (146 aa).

Belongs to the UPF0178 family.

The chain is UPF0178 protein R01393 from Rhizobium meliloti (strain 1021) (Ensifer meliloti).